The chain runs to 2178 residues: Streptococcal hemagglutinin (2178 aa).

The first 90 residues, 1–90 (MFFKRQKGQY…AVVTSSSVYA (90 aa)), serve as a signal peptide directing secretion. A non-repeat region 1 (NR1) region spans residues 91-137 (EEEQALEKVIDTRDVLATRGEAVLSEEAATTLSSEGANPVESLSDTL). The segment at 138–219 (SASESASANS…SLISSDSSNS (82 aa)) is ser-rich region 1 (SR1). The span at 192-244 (TSQSFSSTTSSTQSSNNESLISSDSSNSLNTNQSVSARNQNARVRTRRAVAAN) shows a compositional bias: low complexity. 11 disordered regions span residues 192-246 (TSQS…ANDT), 495-557 (VSAS…SVSA), 584-653 (SAST…SVSA), 836-857 (SAST…SVSA), 884-917 (SAST…SVSA), 944-993 (SAST…SESA), 1020-1289 (SASV…SVSA), 1341-1390 (ASTS…ESAS), 1488-1685 (SASV…SVSA), 1725-1901 (ASTS…SAST), and 2119-2151 (LSQS…GESE). The segment at 220 to 449 (LNTNQSVSAR…ANRVVKDLQI (230 aa)) is non-repeat region 2 (NR2). The interval 450–2143 (SKSNSASQSS…SMHDRISKGQ (1694 aa)) is ser-rich region 2 (SR2). The segment covering 2119–2130 (LSQSLSDSQSTS) has biased composition (low complexity). Residues 2144-2148 (LPRTG) carry the LPXTG sorting signal motif. Position 2147 is a pentaglycyl murein peptidoglycan amidated threonine (threonine 2147). The propeptide at 2148–2178 (GESESKASILALGIGALGLAFKKRKKNESED) is removed by sortase.

Belongs to the serine-rich repeat protein (SRRP) family. The protein is glycosylated in vivo; constructs without SR1 and SR2 are not glycosylated.

The protein localises to the secreted. The protein resides in the cell wall. In terms of biological role, a cell wall protein involved with PadA in host cell interactions required for colonization and pathogensis. Mediates hemagglutination and adherence to ghst glycoproteins. Recognizes fetuin-A (AHSG), a highly glycosylated human plasma protein, also involved in recognition of human platelets, probably via platelet glycoprotein Ib alpha (GP1BA). Acts in concert with PadA to promote binding to glycosylated human fibronectin (FN1) and vitronectin (VTN), and biofilm formation. Plays a major role in fibronectin and vitronectin binding; binding is mediated by glycosylated regions. Probably mediates interaction of PadA with resting platelets. The protein is Streptococcal hemagglutinin of Streptococcus gordonii (strain Challis / ATCC 35105 / BCRC 15272 / CH1 / DL1 / V288).